The primary structure comprises 1139 residues: Ras GTPase-activating protein nGAP (1139 aa).

The interval 1–87 is disordered; the sequence is MQTPEVPAER…SRGLPKLKES (87 aa). Ser-16 is modified (phosphoserine). Positions 17 to 36 are enriched in polar residues; sequence ISGTSTSEKPNSMDTANTSP. Residues 41–158 form the PH domain; sequence GFFSKRLKGS…WMENLRRTVQ (118 aa). A compositionally biased stretch (basic residues) spans 45 to 56; the sequence is KRLKGSIKRTKS. Over residues 73–87 the composition is skewed to basic and acidic residues; that stretch reads STDDRSRGLPKLKES. Ser-89 carries the post-translational modification Phosphoserine. Residues 149–267 form the C2 domain; it reads WMENLRRTVQ…TGRQFVEKWY (119 aa). Residues 343–551 form the Ras-GAP domain; the sequence is GRAKDFLTDL…GGMKRFLLEI (209 aa). Thr-620 bears the Phosphothreonine mark. Position 663 is a phosphoserine (Ser-663). 5 disordered regions span residues 684–704, 751–782, 803–869, 910–953, and 1116–1139; these read ASSQSMTYSEKDERESSLPNG, ETQSTPQSAPQVRRPLHPALNQPGGLQPLSFQ, SLEN…GQAQ, EPVQ…SATM, and NGISPTNPTKLSITENGEFKNSSC. 2 stretches are compositionally biased toward polar residues: residues 751 to 760 and 803 to 818; these read ETQSTPQSAP and SLENLSTASSRSQSNS. The segment covering 833–855 has biased composition (basic and acidic residues); that stretch reads DFTKRSTQSEDFSRRHTVPDRHI. Ser-864 bears the Phosphoserine mark. Residues 916-928 show a composition bias toward low complexity; sequence SRSRQQSSSSRES.

In terms of assembly, interacts with PEAK1.

In terms of biological role, inhibitory regulator of the Ras-cyclic AMP pathway. This is Ras GTPase-activating protein nGAP (RASAL2) from Homo sapiens (Human).